The primary structure comprises 471 residues: Nuclear distribution protein PAC1 (471 aa).

The LisH domain occupies 9-41 (QAEELHKSMIAYLLSVNLSKSAAALREELADSV). Residues 60–87 (TSVVRLQKKIMDLESRNAALQQELDSAT) adopt a coiled-coil conformation. Residues 83–93 (LDSATPTSLSR) are compositionally biased toward polar residues. The interval 83 to 108 (LDSATPTSLSRRNQDPASWLPRAPAR) is disordered. WD repeat units follow at residues 113 to 154 (SHRG…RTIK), 156 to 196 (HTRA…KNIR), 200 to 247 (GHDH…CVKT), 250 to 289 (GHLD…TKST), 292 to 352 (GHEH…IKTL), 354 to 393 (GHDN…KCVR), 398 to 428 (AHGH…INGQ), and 429 to 467 (GTPS…MNVR). The interval 424 to 449 (GINGQGTPSMNGVSISTTSKKEDTGG) is disordered. Polar residues predominate over residues 428-441 (QGTPSMNGVSISTT).

This sequence belongs to the WD repeat LIS1/nudF family. In terms of assembly, self-associates. Interacts with NDL1 and dynein.

The protein localises to the cytoplasm. Its subcellular location is the cytoskeleton. The protein resides in the spindle pole. Its function is as follows. Positively regulates the activity of the minus-end directed microtubule motor protein dynein. May enhance dynein-mediated microtubule sliding by targeting dynein to the microtubule plus end. Required for nuclear migration during vegetative growth as well as development. Required for retrograde early endosome (EE) transport from the hyphal tip. Required for localization of dynein to the mitotic spindle poles. Recruits additional proteins to the dynein complex at SPBs. The chain is Nuclear distribution protein PAC1 from Coccidioides posadasii (strain C735) (Valley fever fungus).